A 521-amino-acid chain; its full sequence is MEFNIKSGSPEKQRVACVIVGVYESRKLTFAADLLDRISNGFISDVIRHGDMEGKLGSTLVLHSVPHTLCDRVMLVGLGKERDFRAKEYREAVRASVKALTQTSASEAVSYLSELTVKKHDVEWMIEQATVVTLDALYRFDRFKSKQDESVREPRKLTLAVPRRSDLADGEKGLQRGLAIGNGMKLAKDLGNLPGNVCTPSYLGEEARKVAETFGAEAEILGPREIAELGMHSFLSVAKGSAEEARLIVLKHHGAKDKNDKPIVLVGKGITFDSGGISLKPGEGMDEMKYDMCGAATVLGAFRAAVEMNLPLNVIAIVPTCENMPNGNAVKPGDIVTSMSGQTIEILNTDAEGRLILCDALTYAERFSPATVIDVATLTGACVIALGHIATGLYSNQDSLARELLAAGEEVADRAWHMPMWDEYQEMLKSPFADMANIGGRPGGSVTAACFLSRFAKAYDWAHLDIAGTAWKGGKDKGATARPVPLLVQFLQDRADIALGNVVRRGRPRREAPEVADDEQD.

Mn(2+) is bound by residues Lys-268 and Asp-273. The active site involves Lys-280. Residues Asp-291, Asp-350, and Glu-352 each coordinate Mn(2+). Arg-354 is an active-site residue.

This sequence belongs to the peptidase M17 family. Mn(2+) serves as cofactor.

The protein resides in the cytoplasm. It carries out the reaction Release of an N-terminal amino acid, Xaa-|-Yaa-, in which Xaa is preferably Leu, but may be other amino acids including Pro although not Arg or Lys, and Yaa may be Pro. Amino acid amides and methyl esters are also readily hydrolyzed, but rates on arylamides are exceedingly low.. The enzyme catalyses Release of an N-terminal amino acid, preferentially leucine, but not glutamic or aspartic acids.. Presumably involved in the processing and regular turnover of intracellular proteins. Catalyzes the removal of unsubstituted N-terminal amino acids from various peptides. This is Probable cytosol aminopeptidase from Chromobacterium violaceum (strain ATCC 12472 / DSM 30191 / JCM 1249 / CCUG 213 / NBRC 12614 / NCIMB 9131 / NCTC 9757 / MK).